A 334-amino-acid chain; its full sequence is N-acetyl-gamma-glutamyl-phosphate reductase (334 aa).

Cysteine 154 is an active-site residue.

It belongs to the NAGSA dehydrogenase family. Type 1 subfamily.

The protein localises to the cytoplasm. The catalysed reaction is N-acetyl-L-glutamate 5-semialdehyde + phosphate + NADP(+) = N-acetyl-L-glutamyl 5-phosphate + NADPH + H(+). It participates in amino-acid biosynthesis; L-arginine biosynthesis; N(2)-acetyl-L-ornithine from L-glutamate: step 3/4. In terms of biological role, catalyzes the NADPH-dependent reduction of N-acetyl-5-glutamyl phosphate to yield N-acetyl-L-glutamate 5-semialdehyde. This Salmonella typhimurium (strain LT2 / SGSC1412 / ATCC 700720) protein is N-acetyl-gamma-glutamyl-phosphate reductase.